Consider the following 243-residue polypeptide: ATP synthase subunit b, mitochondrial (243 aa).

This sequence belongs to the eukaryotic ATPase B chain family. As to quaternary structure, F-type ATPases have 2 components, CF(1) - the catalytic core - and CF(0) - the membrane proton channel. CF(1) has five subunits: alpha(3), beta(3), gamma(1), delta(1), epsilon(1). CF(0) has three main subunits: a, b and c.

The protein resides in the mitochondrion. The protein localises to the mitochondrion inner membrane. In terms of biological role, mitochondrial membrane ATP synthase (F(1)F(0) ATP synthase or Complex V) produces ATP from ADP in the presence of a proton gradient across the membrane which is generated by electron transport complexes of the respiratory chain. F-type ATPases consist of two structural domains, F(1) - containing the extramembraneous catalytic core, and F(0) - containing the membrane proton channel, linked together by a central stalk and a peripheral stalk. During catalysis, ATP synthesis in the catalytic domain of F(1) is coupled via a rotary mechanism of the central stalk subunits to proton translocation. Part of the complex F(0) domain and the peripheric stalk, which acts as a stator to hold the catalytic alpha(3)beta(3) subcomplex and subunit a/ATP6 static relative to the rotary elements. The chain is ATP synthase subunit b, mitochondrial from Drosophila melanogaster (Fruit fly).